Reading from the N-terminus, the 391-residue chain is GDSL esterase/lipase 22 (391 aa).

The signal sequence occupies residues 1 to 29; it reads MMANNCNLVSVLCVILVLTLFHNPITVAG. S43 functions as the Nucleophile in the catalytic mechanism. N105, N165, and N288 each carry an N-linked (GlcNAc...) asparagine glycan. Residues D322 and H325 contribute to the active site. The interval 372–391 is disordered; sequence PATVHASDSSSSTSRGYEYY.

Belongs to the 'GDSL' lipolytic enzyme family. As to quaternary structure, component of the PYK10 complex, at least composed of PYK10/BGLU23, BGLU21, BGLU22, JAL22, JAL23, PBP1/JAL30, PBP2/JAL31, JAL32, JAL33, JAL34, JAL35, GLL22 and GLL23.

It localises to the secreted. The polypeptide is GDSL esterase/lipase 22 (GLL22) (Arabidopsis thaliana (Mouse-ear cress)).